We begin with the raw amino-acid sequence, 264 residues long: Hydroxyethylthiazole kinase (264 aa).

Residue Met52 coordinates substrate. Residues Arg127 and Thr173 each coordinate ATP. Gly200 is a substrate binding site.

Belongs to the Thz kinase family. It depends on Mg(2+) as a cofactor.

The enzyme catalyses 5-(2-hydroxyethyl)-4-methylthiazole + ATP = 4-methyl-5-(2-phosphooxyethyl)-thiazole + ADP + H(+). Its pathway is cofactor biosynthesis; thiamine diphosphate biosynthesis; 4-methyl-5-(2-phosphoethyl)-thiazole from 5-(2-hydroxyethyl)-4-methylthiazole: step 1/1. Its function is as follows. Catalyzes the phosphorylation of the hydroxyl group of 4-methyl-5-beta-hydroxyethylthiazole (THZ). This chain is Hydroxyethylthiazole kinase, found in Pectobacterium carotovorum subsp. carotovorum (strain PC1).